A 301-amino-acid polypeptide reads, in one-letter code: MNTVFNGKDFANKYYLILKEFLKQHDLRDKIALKVVLANNEPASKLYVSIKNRVAKEIGLNVEVIKFSANSVQSDILEVIDRENKNLSTDGIIVQLPLLRHMDSNSILNSIVYSKDVDGLSFVNLGKMILGDKKGFIPCTALAVLKILLDEGIRTSGKTVVVVGRSPLVGKPISILLSSKPYDATVIVCHSKSIYLDVYLRQADIVISAVGKPKLIDKSMLCGEPYVIDIGISEIETDNGKILSGDTDFDNIKDCVKFITPVKGGIGPVTVLMLMFNTIKAHLINNNMFDILDRLEKLVEV.

NADP(+) is bound by residues 164–166 (GRS), Ser-191, and Ile-232.

Belongs to the tetrahydrofolate dehydrogenase/cyclohydrolase family. Homodimer.

It carries out the reaction (6R)-5,10-methylene-5,6,7,8-tetrahydrofolate + NADP(+) = (6R)-5,10-methenyltetrahydrofolate + NADPH. The catalysed reaction is (6R)-5,10-methenyltetrahydrofolate + H2O = (6R)-10-formyltetrahydrofolate + H(+). It participates in one-carbon metabolism; tetrahydrofolate interconversion. In terms of biological role, catalyzes the oxidation of 5,10-methylenetetrahydrofolate to 5,10-methenyltetrahydrofolate and then the hydrolysis of 5,10-methenyltetrahydrofolate to 10-formyltetrahydrofolate. This Borrelia garinii subsp. bavariensis (strain ATCC BAA-2496 / DSM 23469 / PBi) (Borreliella bavariensis) protein is Bifunctional protein FolD.